Consider the following 447-residue polypeptide: N-succinylarginine dihydrolase (447 aa).

Substrate contacts are provided by residues 19–28 (AGLSFGNEAS), Asn110, and 137–138 (HR). The active site involves Glu174. Arg212 is a binding site for substrate. His248 is a catalytic residue. Asp250 and Asn359 together coordinate substrate. The active-site Nucleophile is Cys365.

It belongs to the succinylarginine dihydrolase family. As to quaternary structure, homodimer.

The enzyme catalyses N(2)-succinyl-L-arginine + 2 H2O + 2 H(+) = N(2)-succinyl-L-ornithine + 2 NH4(+) + CO2. Its pathway is amino-acid degradation; L-arginine degradation via AST pathway; L-glutamate and succinate from L-arginine: step 2/5. In terms of biological role, catalyzes the hydrolysis of N(2)-succinylarginine into N(2)-succinylornithine, ammonia and CO(2). The chain is N-succinylarginine dihydrolase from Salmonella agona (strain SL483).